The primary structure comprises 1361 residues: MEHYLRSVHNSPTLSMISAARGLSPAEVAHEHLKERGIYGLAPPPPPGTTPTEYCHQMAFLASHASPYGELLVQSAAAGNTSHLHDYLTPMDVSRFSSPRVTPRLSRKRALSISPLSDASIDLQTMIRTSPNSLVAYINNSRSSSAASGSYGHLSAGAISPAFSFPIHKPCSLSAALSQQRSLSSSFGHTPLLHPSPTFASRQQGALTSANPAPPSNNSSAPDSVLNKVSSESAVSSTVNQVIHKRSKVKTEEEADSVRFPQPPDHLTDLKEDLDKDECKQEPEHIYETNCHWDGCSKEFDTQDQLVHHINNDHIHGEKKEFVCRWQDCSREQKPFKAQYMLVVHMRRHTGEKPHKCTFEGCFKAYSRLENLKTHLRSHTGEKPYVCDHEGCNKAFSNASDRAKHQNRTHSNEKPYICKVPGCTKRYTDPSSLRKHVKTVHGPEAHVTKKHRNDIIQKPSLPKENGDNEASAKLSGREHSDSVSRDQEHCLQTRTIKTEDNMMHQSSPGGQSSCSSEPSPYGNTNNIDSGVDVSLAWQGSLGDLFGLEETSPVVDSTVSSWQRSGRPATPETQRIHSAETGTAEEREIKDNERFLLIYEPNATCQNTRLPTISANGFDVIGVPSSVLINPRAIELSMNDVTMMNQLNERRDSTSSTLSSAYTSRRSSGISPYFSSRRSSETSQFGGRLNNSSSADSYDPISTDASRRSSEASQHSGLPNLLNLTPAQHYRLKAKYAAATGGPPPTPLPNMDRIGLRNKLSLMDGADFPLPPFRQLPVPRRCSDGGGNAGLTPMYPHEIPGNNSRRASDPVRRTAGIDDKPLPRFSRFHSMNSMNTLHPPSLSERRNGGLQHYTCSDGGLHRHVYSPRPPSISENVAMEAISCDADVPGGDDDLMLPDDVVQYIRSQNREAPEQNLQTEYSSPARNLQSNTKSFHNNTPEQPRAPGAYLSRNFPALAECLGQTANMQDNNMPVQWNEVSSGTVDVSDLPKQQFAAGNLAVVQQKQNFAQYQSFNQAPMQRAHNIMGQGQESVQRNISVNGQRFNYLQQRQQQMSQCQIVSSDFIPQQRYSQSQSMLSSRAMQEGQSQISPSCNNMVERPGVHTHAAPSNTLNHQRLAVHGAPTQGFANNFSVNQDGLHPPNAYTVQPQKNGLEPQQNTLGMSGQAFNHGMIQPRPPAAPHPPNRPRNIHPVHHPPYMRSPHPVSELSPGQQTAEATPKRTSENTDPTPKDNNLLYYSGQIHMYEPNGNFGSGIDCTVRQLPTMPSPGANQVTSTVDSQGLEHPPVIDFDAMMDDGDHSSLMSGTLSPGLLQSFSQTSSRLTTPRNSLTLPSIPAGINNMAIGDMSSMLTTLAEESKFLNLMS.

The segment at Ser-185–Leu-270 is disordered. 2 stretches are compositionally biased toward polar residues: residues Thr-198–Thr-208 and Asn-227–Gln-241. 5 consecutive C2H2-type zinc fingers follow at residues Thr-289–His-314, Phe-322–His-349, His-355–His-379, Tyr-385–His-410, and Tyr-416–His-441. Disordered stretches follow at residues Arg-434–Ile-527, Ser-556–Glu-584, Asn-647–Leu-720, Asn-787–Ser-832, Gln-906–Ala-946, and Asp-1134–Asn-1230. Positions Ser-475–Met-502 are enriched in basic and acidic residues. Low complexity predominate over residues Ser-506–Gly-522. Basic and acidic residues predominate over residues Gln-573–Glu-584. Positions Thr-653–Ser-670 are enriched in low complexity. 2 stretches are compositionally biased toward polar residues: residues Tyr-672–Asp-695 and Glu-710–Leu-720. Residues Arg-805–Leu-821 show a composition bias toward basic and acidic residues. Polar residues-rich tracts occupy residues Gln-913 to Glu-939 and Tyr-1142 to Ala-1164. Residues Pro-1172–Arg-1183 are compositionally biased toward pro residues.

This sequence belongs to the GLI C2H2-type zinc-finger protein family.

The protein localises to the nucleus. Its function is as follows. Has an essential role in the early embryonic patterning of mesoderm and neuroectoderm. The chain is Zinc finger protein GLI4 (gli4) from Xenopus laevis (African clawed frog).